The following is a 567-amino-acid chain: Proline--tRNA ligase (567 aa).

The protein belongs to the class-II aminoacyl-tRNA synthetase family. ProS type 1 subfamily. Homodimer.

It localises to the cytoplasm. The catalysed reaction is tRNA(Pro) + L-proline + ATP = L-prolyl-tRNA(Pro) + AMP + diphosphate. Catalyzes the attachment of proline to tRNA(Pro) in a two-step reaction: proline is first activated by ATP to form Pro-AMP and then transferred to the acceptor end of tRNA(Pro). As ProRS can inadvertently accommodate and process non-cognate amino acids such as alanine and cysteine, to avoid such errors it has two additional distinct editing activities against alanine. One activity is designated as 'pretransfer' editing and involves the tRNA(Pro)-independent hydrolysis of activated Ala-AMP. The other activity is designated 'posttransfer' editing and involves deacylation of mischarged Ala-tRNA(Pro). The misacylated Cys-tRNA(Pro) is not edited by ProRS. The sequence is that of Proline--tRNA ligase from Idiomarina loihiensis (strain ATCC BAA-735 / DSM 15497 / L2-TR).